Here is a 327-residue protein sequence, read N- to C-terminus: Phenylalanine--tRNA ligase alpha subunit (327 aa).

Glu-252 serves as a coordination point for Mg(2+).

This sequence belongs to the class-II aminoacyl-tRNA synthetase family. Phe-tRNA synthetase alpha subunit type 1 subfamily. Tetramer of two alpha and two beta subunits. Requires Mg(2+) as cofactor.

It localises to the cytoplasm. The catalysed reaction is tRNA(Phe) + L-phenylalanine + ATP = L-phenylalanyl-tRNA(Phe) + AMP + diphosphate + H(+). The protein is Phenylalanine--tRNA ligase alpha subunit of Shigella boydii serotype 18 (strain CDC 3083-94 / BS512).